Consider the following 98-residue polypeptide: NADH-ubiquinone oxidoreductase chain 4L (98 aa).

3 consecutive transmembrane segments (helical) span residues 1-21 (MSLV…GLLM), 25-45 (HLMS…ILST), and 67-87 (AACE…TYGV).

Belongs to the complex I subunit 4L family. As to quaternary structure, core subunit of respiratory chain NADH dehydrogenase (Complex I) which is composed of 45 different subunits.

The protein resides in the mitochondrion inner membrane. It carries out the reaction a ubiquinone + NADH + 5 H(+)(in) = a ubiquinol + NAD(+) + 4 H(+)(out). In terms of biological role, core subunit of the mitochondrial membrane respiratory chain NADH dehydrogenase (Complex I) which catalyzes electron transfer from NADH through the respiratory chain, using ubiquinone as an electron acceptor. Part of the enzyme membrane arm which is embedded in the lipid bilayer and involved in proton translocation. This Talpa europaea (European mole) protein is NADH-ubiquinone oxidoreductase chain 4L (MT-ND4L).